The sequence spans 302 residues: N-acetylmuramic acid 6-phosphate etherase (302 aa).

The SIS domain maps to 58 to 221; the sequence is IGESFLNGGR…STGAMVKTGK (164 aa). E86 functions as the Proton donor in the catalytic mechanism. E117 is a catalytic residue.

Belongs to the GCKR-like family. MurNAc-6-P etherase subfamily. As to quaternary structure, homodimer.

It carries out the reaction N-acetyl-D-muramate 6-phosphate + H2O = N-acetyl-D-glucosamine 6-phosphate + (R)-lactate. Its pathway is amino-sugar metabolism; N-acetylmuramate degradation. Functionally, specifically catalyzes the cleavage of the D-lactyl ether substituent of MurNAc 6-phosphate, producing GlcNAc 6-phosphate and D-lactate. In Clostridium botulinum (strain Langeland / NCTC 10281 / Type F), this protein is N-acetylmuramic acid 6-phosphate etherase.